Consider the following 720-residue polypeptide: ATP-dependent RNA helicase glh-3 (720 aa).

Polar residues predominate over residues 1-11 (MDKSPTKTSIR). 2 disordered regions span residues 1–34 (MDKSPTKTSIRTKFARHQPISDVDTTEQSSSCIK) and 125–180 (LNSR…SYGN). 2 stretches are compositionally biased toward basic and acidic residues: residues 141 to 154 (NVKENEGSIHRSDD) and 162 to 172 (SAKDEERDRDS). 2 CCHC-type zinc fingers span residues 202–219 (NTCFNCKKYGHRATECSA) and 222–239 (RECANCGDPNHRANECAS). The short motif at 298-326 (KSFSDSDIPQSMRRNVERAGYTRTTPIQQ) is the Q motif element. In terms of domain architecture, Helicase ATP-binding spans 329–513 (LPLVADGKDI…RKLLREDYTM (185 aa)). 342–349 (AQTGSGKT) is an ATP binding site. The short motif at 456 to 459 (DEAD) is the DEAD box element. In terms of domain architecture, Helicase C-terminal spans 549-698 (DIDTYTTEKN…VVPSWMKEAA (150 aa)). The disordered stretch occupies residues 696–720 (EAAGGTSNPNKFEKSIDTEEPEEAW).

This sequence belongs to the DEAD box helicase family. DDX4/VASA subfamily. As to quaternary structure, interacts with csn-5. Interacts (via C-terminus) with kgb-1. Interacts with zyx-1.

The protein localises to the cytoplasm. It catalyses the reaction ATP + H2O = ADP + phosphate + H(+). Its function is as follows. Probable ATP-binding RNA helicase. In Caenorhabditis elegans, this protein is ATP-dependent RNA helicase glh-3.